The primary structure comprises 309 residues: UDP-URONIC ACID TRANSPORTER 1 (309 aa).

10 consecutive transmembrane segments (helical) span residues threonine 9–leucine 29, isoleucine 43–phenylalanine 63, phenylalanine 78–serine 98, valine 104–leucine 124, alanine 131–glycine 151, glutamate 152–phenylalanine 172, leucine 193–glutamate 213, tryptophan 231–valine 251, serine 256–isoleucine 278, and valine 283–glycine 302.

The protein belongs to the TPT transporter family. TPT (TC 2.A.7.9) subfamily. As to expression, ubiquitous.

The protein localises to the golgi apparatus membrane. In terms of biological role, UDP-glucuronic acid transporter that modulates the polysaccharide composition of seed mucilage. Transports UDP-glucuronic acid (UDP-GlcA) and UDP-galacturonic acid (UDP-GalA) in vitro. In Arabidopsis thaliana (Mouse-ear cress), this protein is UDP-URONIC ACID TRANSPORTER 1.